The primary structure comprises 180 residues: MSEPELQLVARRIRSFPDFPIPGVLFRDISPLLKDPDSFRASIRLLASHLKSLHGGKIDYIAGLDSRGFLFGPSLAQELGVGCVLIRKRGKLPGPTLSASYALEYGKAELEIQKDALEPGQRVVIVDDLLATGGTMCAACELLNQLRAEVVECVSLVELTSLKGRERLGPIPFFSLLQYD.

At S2 the chain carries N-acetylserine. Residues S15 and S30 each carry the phosphoserine modification. Y60 carries the post-translational modification Phosphotyrosine. S66 carries the phosphoserine modification. At K114 the chain carries N6-acetyllysine. T135 is modified (phosphothreonine).

Belongs to the purine/pyrimidine phosphoribosyltransferase family. Homodimer.

It localises to the cytoplasm. It catalyses the reaction AMP + diphosphate = 5-phospho-alpha-D-ribose 1-diphosphate + adenine. It participates in purine metabolism; AMP biosynthesis via salvage pathway; AMP from adenine: step 1/1. Catalyzes a salvage reaction resulting in the formation of AMP, that is energically less costly than de novo synthesis. The polypeptide is Adenine phosphoribosyltransferase (Mastomys natalensis (African soft-furred rat)).